We begin with the raw amino-acid sequence, 103 residues long: Urease subunit beta (103 aa).

It belongs to the urease beta subunit family. In terms of assembly, heterotrimer of UreA (gamma), UreB (beta) and UreC (alpha) subunits. Three heterotrimers associate to form the active enzyme.

Its subcellular location is the cytoplasm. The catalysed reaction is urea + 2 H2O + H(+) = hydrogencarbonate + 2 NH4(+). The protein operates within nitrogen metabolism; urea degradation; CO(2) and NH(3) from urea (urease route): step 1/1. The protein is Urease subunit beta of Mycobacterium marinum (strain ATCC BAA-535 / M).